We begin with the raw amino-acid sequence, 236 residues long: EP300-interacting inhibitor of differentiation 2 (236 aa).

A compositionally biased stretch (polar residues) spans 1–15 (MSQLPAVSSAPQTGA). The interval 1-102 (MSQLPAVSSA…REGPAAAAAS (102 aa)) is disordered. 2 stretches are compositionally biased toward low complexity: residues 32–68 (RALPGPARPGETRGRPMAAAREGPAAPAAAARGGRVA) and 75–102 (AAAARGGPGAAPRGGAAAREGPAAAAAS). An omega-N-methylarginine mark is found at Arg63 and Arg79. The stretch at 170-190 (RIQELEERRRRFVEACRAREA) forms a coiled coil.

As to quaternary structure, heterodimer with EID2B. Interacts with the C-terminus of EP300. Interacts with HDAC1 and HDAC2. Interacts with SMAD2, SMAD4 and with the MH2 domain of SMAD3. As to expression, expressed in heart, brain, kidney and pancreas. Not detected in placenta.

The protein resides in the nucleus. Its function is as follows. Interacts with EP300 and acts as a repressor of MYOD-dependent transcription and muscle differentiation. Inhibits EP300 histone acetyltransferase activity. Acts as a repressor of TGFB/SMAD transcriptional responses. May act as a repressor of the TGFB/SMAD3-dependent signaling by selectively blocking formation of TGFB-induced SMAD3-SMAD4 complex. The chain is EP300-interacting inhibitor of differentiation 2 from Mus musculus (Mouse).